We begin with the raw amino-acid sequence, 131 residues long: Small ribosomal subunit protein uS11 (131 aa).

The protein belongs to the universal ribosomal protein uS11 family. Part of the 30S ribosomal subunit. Interacts with proteins S7 and S18. Binds to IF-3.

Its function is as follows. Located on the platform of the 30S subunit, it bridges several disparate RNA helices of the 16S rRNA. Forms part of the Shine-Dalgarno cleft in the 70S ribosome. In Exiguobacterium sibiricum (strain DSM 17290 / CCUG 55495 / CIP 109462 / JCM 13490 / 255-15), this protein is Small ribosomal subunit protein uS11.